Consider the following 517-residue polypeptide: MVTRDAGMADDAATGSTRTYQVRTYGCQMNVHDSERLAGLLEAAGYQRAADEADVGDADVVVFNTCAVRENADNRLYGNLSHLAPRKRNNPDMQIAVGGCLAQKDKHTVLSKAPWVDIVFGTHNLGSLPTLLDRARHNKVAQVEIVEALQHFPSSLPSARESDYAAWVSISVGCNNSCTFCIVPSLRGKEVDRSPADILAEVEALVADGVLEVTLLGQNVNAYGVSFADPALARNRGSFAELLRSCGSIDGLERVRFTSPHPAEFTYDVIEAMAQTPNVCPSLHMPLQSGSDRVLRAMRRSYRVERYLGIIGQVRAAMPHAAITTDLIVGFPGETEEDFAATLDVVRQVRFTAAFTFQYSKRPGTPAAELGGQLPKAVVQERYERLVELQEQICMEENRVLIGRIVELLVTTGEGRKDARTARRTGRARDGRLVHFALDTPWEAQVRPGDIITVMVTEAAPHHLIADAGILTHRRTRAGDAHAARQCPRSIGLGQIPLGMPSVGQHSASIGSAGCAR.

The region spanning 18-137 (RTYQVRTYGC…LPTLLDRARH (120 aa)) is the MTTase N-terminal domain. Cys27, Cys66, Cys100, Cys174, Cys178, and Cys181 together coordinate [4Fe-4S] cluster. In terms of domain architecture, Radical SAM core spans 160–397 (RESDYAAWVS…ELQEQICMEE (238 aa)). A TRAM domain is found at 399–470 (RVLIGRIVEL…PHHLIADAGI (72 aa)).

Belongs to the methylthiotransferase family. MiaB subfamily. As to quaternary structure, monomer. The cofactor is [4Fe-4S] cluster.

It is found in the cytoplasm. The enzyme catalyses N(6)-dimethylallyladenosine(37) in tRNA + (sulfur carrier)-SH + AH2 + 2 S-adenosyl-L-methionine = 2-methylsulfanyl-N(6)-dimethylallyladenosine(37) in tRNA + (sulfur carrier)-H + 5'-deoxyadenosine + L-methionine + A + S-adenosyl-L-homocysteine + 2 H(+). Catalyzes the methylthiolation of N6-(dimethylallyl)adenosine (i(6)A), leading to the formation of 2-methylthio-N6-(dimethylallyl)adenosine (ms(2)i(6)A) at position 37 in tRNAs that read codons beginning with uridine. This chain is tRNA-2-methylthio-N(6)-dimethylallyladenosine synthase, found in Mycobacterium leprae (strain TN).